A 938-amino-acid chain; its full sequence is Isoleucine--tRNA ligase (938 aa).

The short motif at 58–68 (PYANGSIHIGH) is the 'HIGH' region element. The residue at position 183 (Lys-183) is an N6-acetyllysine. Glu-561 is an L-isoleucyl-5'-AMP binding site. The 'KMSKS' region motif lies at 602-606 (KMSKS). Lys-605 is a binding site for ATP. Zn(2+) contacts are provided by Cys-901, Cys-904, Cys-921, and Cys-924.

Belongs to the class-I aminoacyl-tRNA synthetase family. IleS type 1 subfamily. In terms of assembly, monomer. Zn(2+) serves as cofactor.

It is found in the cytoplasm. It carries out the reaction tRNA(Ile) + L-isoleucine + ATP = L-isoleucyl-tRNA(Ile) + AMP + diphosphate. In terms of biological role, catalyzes the attachment of isoleucine to tRNA(Ile). As IleRS can inadvertently accommodate and process structurally similar amino acids such as valine, to avoid such errors it has two additional distinct tRNA(Ile)-dependent editing activities. One activity is designated as 'pretransfer' editing and involves the hydrolysis of activated Val-AMP. The other activity is designated 'posttransfer' editing and involves deacylation of mischarged Val-tRNA(Ile). The chain is Isoleucine--tRNA ligase from Shigella dysenteriae serotype 1 (strain Sd197).